The following is a 310-amino-acid chain: Junctional adhesion molecule C (310 aa).

The first 29 residues, 1–29 (MALSRRLRLRLYARLPDFFLLLLFRGCMI), serve as a signal peptide directing secretion. Topologically, residues 30–241 (EAVNLKSSNR…GQDMEVYDLN (212 aa)) are extracellular. The Ig-like V-type domain maps to 35–127 (KSSNRNPVVH…VALNDRKEVD (93 aa)). 2 disulfides stabilise this stretch: cysteine 53–cysteine 115 and cysteine 160–cysteine 219. N-linked (GlcNAc...) asparagine glycosylation is found at asparagine 104 and asparagine 192. An Ig-like C2-type domain is found at 139–236 (PVTPVCRIPA…AARCEGQDME (98 aa)). The helical transmembrane segment at 242 to 262 (IAGIIGGVLVVLIVLAVITMG) threads the bilayer. The Cytoplasmic segment spans residues 263-310 (ICCAYRRGCFISSKQDGESYKSPGKHDGVNYIRTSEEGDFRHKSSFVI). S-palmitoyl cysteine attachment occurs at residues cysteine 264 and cysteine 265.

It belongs to the immunoglobulin superfamily. As to quaternary structure, interacts with ITGAM. Interacts with GORASP2. In terms of processing, proteolytically cleaved from endothelial cells surface into a soluble form by ADAM10 and ADAM17; the release of soluble JAM3 is increased by pro-inflammatory factors. Post-translationally, N-glycosylated. S-palmitoylated by ZDHHC7. S-palmitoylation promotes expression at tight junctions. Colocalizes with Jam2 near the lumen of seminiferous tubulues. Detected at junctional plaques that correspond to cell-cell contacts between spermatids and Sertoli cells. Detected on endothelial cells, in brain vessels and kidney glomeruli (at protein level). Detected in heart, lung, liver, kidney, testis, thymus, lymph node and Peyer patch. Endothelial cells.

The protein resides in the cell membrane. It localises to the cell junction. It is found in the desmosome. Its subcellular location is the tight junction. The protein localises to the secreted. Junctional adhesion protein that mediates heterotypic cell-cell interactions with its cognate receptor JAM2 to regulate different cellular processes. Plays a role in homing and mobilization of hematopoietic stem and progenitor cells within the bone marrow. At the surface of bone marrow stromal cells, it contributes to the retention of the hematopoietic stem and progenitor cells expressing JAM3. Plays a central role in leukocytes extravasation by facilitating transmigration through the endothelium. Plays a role in spermatogenesis where JAM2 and JAM3, which are respectively expressed by Sertoli and germ cells, mediate an interaction between both cell types and play an essential role in the anchorage of germ cells onto Sertoli cells and the assembly of cell polarity complexes during spermatid differentiation. Also functions as a counter-receptor for ITGAM, mediating leukocyte-platelet interactions and is involved in the regulation of transepithelial migration of polymorphonuclear neutrophils (PMN). Plays a role in angiogenesis. Plays a role in the regulation of cell migration. During myogenesis, it is involved in myocyte fusion. Functionally, promotes chemotaxis of vascular endothelial cells and stimulates angiogenesis. The protein is Junctional adhesion molecule C (Jam3) of Mus musculus (Mouse).